A 376-amino-acid polypeptide reads, in one-letter code: MAQKQKCVAMLLAGGKGSRLSALTKNLAKPAVPFGGKYRIIDFTLSNCANSGIETVGILTQYQPLELHNYIGIGNAWDLDRVSGGVTVLPPYAESSGVKWYTGTASAIYQNLNYLSQYEPEYVLILSGDHIYKMDYSKMLDYHIEKEADVSISVIEVPWDEASRFGIMNTNEEMEIVEFEEKPQFPRSNLASMGIYIFNWAILKEYLEMDARNPESSNDFGKDVLPLLLDEGKKLMAYPFEGYWKDVGTVKSLWEANMDLLRDETSLNLNDRDWRIYSVNPNEPPQYIAEKAKVEESLINEGCVIEGDVKHSVLFQGVTVEEGSMVIDSVVMPGAKIGKNVVIERAIVGSEMVIEDGTIIRPEKNVDDVVLIAEGK.

Residues Tyr101, Gly166, 181 to 182 (EK), and Ser192 each bind alpha-D-glucose 1-phosphate.

This sequence belongs to the bacterial/plant glucose-1-phosphate adenylyltransferase family. As to quaternary structure, homotetramer.

It carries out the reaction alpha-D-glucose 1-phosphate + ATP + H(+) = ADP-alpha-D-glucose + diphosphate. The protein operates within glycan biosynthesis; glycogen biosynthesis. Functionally, involved in the biosynthesis of ADP-glucose, a building block required for the elongation reactions to produce glycogen. Catalyzes the reaction between ATP and alpha-D-glucose 1-phosphate (G1P) to produce pyrophosphate and ADP-Glc. The chain is Glucose-1-phosphate adenylyltransferase from Bacillus cereus (strain ZK / E33L).